Consider the following 804-residue polypeptide: Chondroitin sulfate synthase mig-22 (804 aa).

At 1–6 (MVGGGR) the chain is on the cytoplasmic side. A helical; Signal-anchor for type II membrane protein membrane pass occupies residues 7-27 (TGIHLLLGFLIGAALALFFFS). Over 28–804 (STPSIDLTSS…QLAKLLFHEK (777 aa)) the chain is Lumenal. N123, N172, and N268 each carry an N-linked (GlcNAc...) asparagine glycan.

This sequence belongs to the chondroitin N-acetylgalactosaminyltransferase family. In terms of assembly, interacts with sqv-5. A divalent metal cation serves as cofactor. In terms of tissue distribution, expressed in seam cells, the vulval epithelium and in oocytes (at protein level).

The protein resides in the golgi apparatus. The protein localises to the golgi stack membrane. The catalysed reaction is 3-O-(beta-D-GlcA-(1-&gt;3)-beta-D-GalNAc-(1-&gt;4)-beta-D-GlcA-(1-&gt;3)-beta-D-Gal-(1-&gt;3)-beta-D-Gal-(1-&gt;4)-beta-D-Xyl)-L-seryl-[protein] + UDP-N-acetyl-alpha-D-galactosamine = 3-O-(beta-D-GalNAc-(1-&gt;4)-beta-D-GlcA-(1-&gt;3)-beta-D-GalNAc-(1-&gt;4)-beta-D-GlcA-(1-&gt;3)-beta-D-Gal-(1-&gt;3)-beta-D-Gal-(1-&gt;4)-beta-D-Xyl)-L-seryl-[protein] + UDP + H(+). It carries out the reaction 3-O-{beta-D-GlcA-(1-&gt;3)-[beta-D-GalNAc-(1-&gt;4)-beta-D-GlcA-(1-&gt;3)](n)-beta-D-GalNAc-(1-&gt;4)-beta-D-GlcA-(1-&gt;3)-beta-D-Gal-(1-&gt;3)-beta-D-Gal-(1-&gt;4)-beta-D-Xyl}-L-seryl-[protein] + UDP-N-acetyl-alpha-D-galactosamine = 3-O-{[beta-D-GalNAc-(1-&gt;4)-beta-D-GlcA-(1-&gt;3)](n+1)-beta-D-GalNAc-(1-&gt;4)-beta-D-GlcA-(1-&gt;3)-beta-D-Gal-(1-&gt;3)-beta-D-Gal-(1-&gt;4)-beta-D-Xyl}-L-seryl-[protein] + UDP + H(+). The enzyme catalyses 3-O-(beta-D-GalNAc-(1-&gt;4)-beta-D-GlcA-(1-&gt;3)-beta-D-Gal-(1-&gt;3)-beta-D-Gal-(1-&gt;4)-beta-D-Xyl)-L-seryl-[protein] + UDP-alpha-D-glucuronate = 3-O-(beta-D-GlcA-(1-&gt;3)-beta-D-GalNAc-(1-&gt;4)-beta-D-GlcA-(1-&gt;3)-beta-D-Gal-(1-&gt;3)-beta-D-Gal-(1-&gt;4)-beta-D-Xyl)-L-seryl-[protein] + UDP + H(+). It catalyses the reaction 3-O-{[beta-D-GalNAc-(1-&gt;4)-beta-D-GlcA-(1-&gt;3)](n)-beta-D-GalNAc-(1-&gt;4)-beta-D-GlcA-(1-&gt;3)-beta-D-Gal-(1-&gt;3)-beta-D-Gal-(1-&gt;4)-beta-D-Xyl}-L-seryl-[protein] + UDP-alpha-D-glucuronate = 3-O-{beta-D-GlcA-(1-&gt;3)-[beta-D-GalNAc-(1-&gt;4)-beta-D-GlcA-(1-&gt;3)](n)-beta-D-GalNAc-(1-&gt;4)-beta-D-GlcA-(1-&gt;3)-beta-D-Gal-(1-&gt;3)-beta-D-Gal-(1-&gt;4)-beta-D-Xyl}-L-seryl-[protein] + UDP + H(+). In terms of biological role, has both beta-1,3-glucuronic acid and beta-1,4-N-acetylgalactosamine transferase activity. Transfers glucuronic acid (GlcUA) from UDP-GlcUA and N-acetylgalactosamine (GalNAc) from UDP-GalNAc to the non-reducing end of the elongating chondroitin polymer. Required together with sqv-5 for the biosynthesis of chondroitin. Chondroitin is involved in organogenesis of the vulva, maturation of the gonad, and neural development. May have a specific role in unc-6/netrin-mediated dorsal guidance of gonadal distal tip cells. Glycosyltransferase activity is weak. The polypeptide is Chondroitin sulfate synthase mig-22 (mig-22) (Caenorhabditis elegans).